Here is a 520-residue protein sequence, read N- to C-terminus: DDB1- and CUL4-associated factor 17 (520 aa).

2 helical membrane-spanning segments follow: residues 186-206 (VLLYLAVFRVLPFSLVGILEI) and 222-242 (GILIVMYSSGLVRLYSFQTIA).

As to quaternary structure, interacts with DDB1, CUL4A and CUL4B. In terms of tissue distribution, ubiquitously expressed.

It localises to the membrane. Its subcellular location is the nucleus. The protein resides in the nucleolus. It functions in the pathway protein modification; protein ubiquitination. May function as a substrate receptor for CUL4-DDB1 E3 ubiquitin-protein ligase complex. The protein is DDB1- and CUL4-associated factor 17 (DCAF17) of Homo sapiens (Human).